A 60-amino-acid chain; its full sequence is MSKGTPSMGKMNKMTHIACRRCGRISFHAQKKVCSSCGFGRSTKMQSFKWDTKRPKTPTH.

Zn(2+)-binding residues include C19, C22, C34, and C37. The C4-type zinc finger occupies 19-37 (CRRCGRISFHAQKKVCSSC).

It belongs to the eukaryotic ribosomal protein eL37 family. Zn(2+) is required as a cofactor.

Its function is as follows. Binds to the 23S rRNA. The polypeptide is Large ribosomal subunit protein eL37 (Methanoregula boonei (strain DSM 21154 / JCM 14090 / 6A8)).